The following is a 973-amino-acid chain: Splicing regulator ARVCF (973 aa).

The interval 95-123 (VTVEEDPGTPTSHVSIVTSEDGTTRRTET) is disordered. A phosphothreonine mark is found at threonine 103 and threonine 105. Over residues 103-115 (TPTSHVSIVTSED) the composition is skewed to polar residues. Arginine 171 is modified (omega-N-methylarginine). Disordered stretches follow at residues 233-254 (RREA…LPEH) and 267-331 (RSLA…QPER). Serine 268 bears the Phosphoserine mark. The span at 271-281 (ADDEGGPDLEP) shows a compositional bias: acidic residues. Residues 289–303 (RRPEYGRGLRARALE) are compositionally biased toward basic and acidic residues. Phosphoserine is present on residues serine 333, serine 336, serine 344, and serine 346. 6 ARM repeats span residues 349–388 (STRK…HLCF), 391–430 (EGIK…NLSY), 434–468 (ADNK…VTGT), 469–509 (LWNL…NEDS), 527–566 (LRNV…DTDN), and 576–623 (MRNL…GKKA). A disordered region spans residues 593–623 (YQEVEPGIPGSAATSQRRRKDDASCFGGKKA). Serine 607 carries the post-translational modification Phosphoserine. The Nuclear localization signal motif lies at 608–624 (QRRRKDDASCFGGKKAK). A Phosphothreonine modification is found at threonine 637. ARM repeat units lie at residues 641-681 (PKRT…AAGA), 694-733 (TYIR…NLSL), 734-776 (DQRN…AVLN), and 777-821 (TIHE…SHVL). Residues 771–955 (VVAVLNTIHE…VLGPGAPPFC (185 aa)) are required for interaction with RNA-binding proteins DDX5, HNRNPH2 and SRSF1 and with mRNAs. A disordered region spans residues 844-926 (FQSASTAKGP…KELLKGPGPA (83 aa)). Serine 865 carries the post-translational modification Phosphoserine. Threonine 866 bears the Phosphothreonine mark. The span at 872–881 (KNLDGEKSTT) shows a compositional bias: basic and acidic residues.

The protein belongs to the beta-catenin family. Component of a ribonucleoprotein complex containing mRNAs and RNA-binding proteins including DDX5, HNRNPH2 and SRSF1 as well as ARVCF. Interacts (via the extreme C-terminus) with FRMPD2 (via the PDZ 2 domain). Interacts with CCDC85B. As to expression, expressed in optic nerve sheath envelope (at protein level). Expressed in heart (at protein level).

It localises to the cell junction. The protein resides in the adherens junction. It is found in the nucleus. Its subcellular location is the cytoplasm. Functionally, contributes to the regulation of alternative splicing of pre-mRNAs. This Rattus norvegicus (Rat) protein is Splicing regulator ARVCF.